The sequence spans 189 residues: Thermostable direct hemolysin 2 (189 aa).

The first 24 residues, 1–24 (MKYRYFAKKSFLFISMLAAFKTFA), serve as a signal peptide directing secretion. Cysteines 175 and 185 form a disulfide.

The protein belongs to the TDH hemolysin family. Homodimer.

Bacterial hemolysins are exotoxins that attack blood cell membranes and cause cell rupture by mechanisms not clearly defined. This chain is Thermostable direct hemolysin 2 (tdh2), found in Vibrio parahaemolyticus serotype O3:K6 (strain RIMD 2210633).